We begin with the raw amino-acid sequence, 277 residues long: Ribosomal RNA small subunit methyltransferase A (277 aa).

Asparagine 23, leucine 25, glycine 50, glutamate 75, aspartate 98, and asparagine 121 together coordinate S-adenosyl-L-methionine.

The protein belongs to the class I-like SAM-binding methyltransferase superfamily. rRNA adenine N(6)-methyltransferase family. RsmA subfamily.

It is found in the cytoplasm. The enzyme catalyses adenosine(1518)/adenosine(1519) in 16S rRNA + 4 S-adenosyl-L-methionine = N(6)-dimethyladenosine(1518)/N(6)-dimethyladenosine(1519) in 16S rRNA + 4 S-adenosyl-L-homocysteine + 4 H(+). In terms of biological role, specifically dimethylates two adjacent adenosines (A1518 and A1519) in the loop of a conserved hairpin near the 3'-end of 16S rRNA in the 30S particle. May play a critical role in biogenesis of 30S subunits. This is Ribosomal RNA small subunit methyltransferase A from Paraburkholderia xenovorans (strain LB400).